We begin with the raw amino-acid sequence, 151 residues long: MEPESIEICPYNPHHRIPLSRFQYHLASCRKKNPKKAKKMASCKYNACHVVPIRKLAEHEATCVNRSSVEEEDTLGPLQVSLPQPQNQDTLQVRWLSNPDIWNVDGANCHPMFVLKSFVPQKLVCESDIQESRGGDQCPEDPQTRTRKANF.

2 consecutive CHHC U11-48K-type zinc fingers follow at residues isoleucine 6–asparagine 33 and methionine 40–serine 67. Zn(2+) contacts are provided by cysteine 9, histidine 15, histidine 25, cysteine 29, cysteine 43, histidine 49, histidine 59, and cysteine 63. A disordered region spans residues glutamine 130–phenylalanine 151.

The protein belongs to the UPF0224 (FAM112) family.

The sequence is that of Gametocyte-specific factor 1-like (Gtsf1l) from Mus musculus (Mouse).